The primary structure comprises 233 residues: Phosphatidylserine decarboxylase proenzyme (233 aa).

Catalysis depends on serine 190, which acts as the Schiff-base intermediate with substrate; via pyruvic acid. Serine 190 is subject to Pyruvic acid (Ser); by autocatalysis.

Belongs to the phosphatidylserine decarboxylase family. PSD-A subfamily. In terms of assembly, heterodimer of a large membrane-associated beta subunit and a small pyruvoyl-containing alpha subunit. Pyruvate is required as a cofactor. Is synthesized initially as an inactive proenzyme. Formation of the active enzyme involves a self-maturation process in which the active site pyruvoyl group is generated from an internal serine residue via an autocatalytic post-translational modification. Two non-identical subunits are generated from the proenzyme in this reaction, and the pyruvate is formed at the N-terminus of the alpha chain, which is derived from the carboxyl end of the proenzyme. The post-translation cleavage follows an unusual pathway, termed non-hydrolytic serinolysis, in which the side chain hydroxyl group of the serine supplies its oxygen atom to form the C-terminus of the beta chain, while the remainder of the serine residue undergoes an oxidative deamination to produce ammonia and the pyruvoyl prosthetic group on the alpha chain.

It is found in the cell membrane. It carries out the reaction a 1,2-diacyl-sn-glycero-3-phospho-L-serine + H(+) = a 1,2-diacyl-sn-glycero-3-phosphoethanolamine + CO2. It functions in the pathway phospholipid metabolism; phosphatidylethanolamine biosynthesis; phosphatidylethanolamine from CDP-diacylglycerol: step 2/2. Catalyzes the formation of phosphatidylethanolamine (PtdEtn) from phosphatidylserine (PtdSer). The protein is Phosphatidylserine decarboxylase proenzyme of Azorhizobium caulinodans (strain ATCC 43989 / DSM 5975 / JCM 20966 / LMG 6465 / NBRC 14845 / NCIMB 13405 / ORS 571).